A 234-amino-acid chain; its full sequence is MGNIVAVIPAAGMGSRMGTEVKKQYLKLQDRPILAHTIDALEQVPDITGIVLVVSPGEETLCQELILKGNLFNKIMAVVPGGDHRQTSVYHGLCSLPGDTELVVIHDGARPLVQRAEISHIIKEARRVGAAALAVPVKDTVKLVNDQGYVIATPNREKLWAVQTPQVFNYELILKAHQDAREKGVYATDDCALVEALGQPVKLVQGSYENIKITTPEDMVMAQAFLKRRNCWCE.

Belongs to the IspD/TarI cytidylyltransferase family. IspD subfamily.

The enzyme catalyses 2-C-methyl-D-erythritol 4-phosphate + CTP + H(+) = 4-CDP-2-C-methyl-D-erythritol + diphosphate. It functions in the pathway isoprenoid biosynthesis; isopentenyl diphosphate biosynthesis via DXP pathway; isopentenyl diphosphate from 1-deoxy-D-xylulose 5-phosphate: step 2/6. In terms of biological role, catalyzes the formation of 4-diphosphocytidyl-2-C-methyl-D-erythritol from CTP and 2-C-methyl-D-erythritol 4-phosphate (MEP). This Desulforamulus reducens (strain ATCC BAA-1160 / DSM 100696 / MI-1) (Desulfotomaculum reducens) protein is 2-C-methyl-D-erythritol 4-phosphate cytidylyltransferase.